We begin with the raw amino-acid sequence, 549 residues long: Dihydroxy-acid dehydratase (549 aa).

Asp78 serves as a coordination point for Mg(2+). Cys119 contacts [2Fe-2S] cluster. Mg(2+) is bound by residues Asp120 and Lys121. Position 121 is an N6-carboxylysine (Lys121). Residue Cys192 coordinates [2Fe-2S] cluster. Glu439 contributes to the Mg(2+) binding site. Ser465 serves as the catalytic Proton acceptor.

This sequence belongs to the IlvD/Edd family. In terms of assembly, homodimer. [2Fe-2S] cluster serves as cofactor. It depends on Mg(2+) as a cofactor.

The catalysed reaction is (2R)-2,3-dihydroxy-3-methylbutanoate = 3-methyl-2-oxobutanoate + H2O. It catalyses the reaction (2R,3R)-2,3-dihydroxy-3-methylpentanoate = (S)-3-methyl-2-oxopentanoate + H2O. The protein operates within amino-acid biosynthesis; L-isoleucine biosynthesis; L-isoleucine from 2-oxobutanoate: step 3/4. It participates in amino-acid biosynthesis; L-valine biosynthesis; L-valine from pyruvate: step 3/4. Functions in the biosynthesis of branched-chain amino acids. Catalyzes the dehydration of (2R,3R)-2,3-dihydroxy-3-methylpentanoate (2,3-dihydroxy-3-methylvalerate) into 2-oxo-3-methylpentanoate (2-oxo-3-methylvalerate) and of (2R)-2,3-dihydroxy-3-methylbutanoate (2,3-dihydroxyisovalerate) into 2-oxo-3-methylbutanoate (2-oxoisovalerate), the penultimate precursor to L-isoleucine and L-valine, respectively. This Endomicrobium trichonymphae protein is Dihydroxy-acid dehydratase.